Here is a 129-residue protein sequence, read N- to C-terminus: Small ribosomal subunit protein uS11c (129 aa).

The protein belongs to the universal ribosomal protein uS11 family. As to quaternary structure, part of the 30S ribosomal subunit.

It is found in the plastid. The protein resides in the chloroplast. The chain is Small ribosomal subunit protein uS11c from Pleurastrum terricola (Filamentous green alga).